Reading from the N-terminus, the 668-residue chain is Ecdysone oxidase (668 aa).

FAD contacts are provided by residues 137-140 (NHMV), V270, and 536-537 (WH). The active-site Proton acceptor is the H537.

It belongs to the GMC oxidoreductase family. FAD is required as a cofactor.

The catalysed reaction is ecdysone + O2 = 3-dehydroecdysone + H2O2. In terms of biological role, involved in the inactivation of ecdysteroid molting hormones by converting ecdysteroids into 3-dehydroecdysteroids. This Bombyx mori (Silk moth) protein is Ecdysone oxidase.